Reading from the N-terminus, the 360-residue chain is Protein RecA (360 aa).

77–84 is an ATP binding site; the sequence is GPESSGKT.

This sequence belongs to the RecA family.

It is found in the cytoplasm. Functionally, can catalyze the hydrolysis of ATP in the presence of single-stranded DNA, the ATP-dependent uptake of single-stranded DNA by duplex DNA, and the ATP-dependent hybridization of homologous single-stranded DNAs. It interacts with LexA causing its activation and leading to its autocatalytic cleavage. This chain is Protein RecA, found in Chelativorans sp. (strain BNC1).